Consider the following 357-residue polypeptide: Protein RecA (357 aa).

An ATP-binding site is contributed by 67-74 (GPESSGKT). The interval 335–357 (LASSASDDESTEGNIDLETGEIF) is disordered.

Belongs to the RecA family.

Its subcellular location is the cytoplasm. Functionally, can catalyze the hydrolysis of ATP in the presence of single-stranded DNA, the ATP-dependent uptake of single-stranded DNA by duplex DNA, and the ATP-dependent hybridization of homologous single-stranded DNAs. It interacts with LexA causing its activation and leading to its autocatalytic cleavage. This chain is Protein RecA, found in Shewanella putrefaciens (strain CN-32 / ATCC BAA-453).